The primary structure comprises 1059 residues: MNMSQASVSFQDVTVEFTREEWQHLGPVERTLYRDVMLENYSHLISVGYCITKPKVISKLEKGEEPWSLEDEFLNQRYPGYFKVDHIKGIREKQEKPLWQEIFISDADKTLSKEGQKVLEKPFNLEIAPELSEKISCKCDSHRMNLPVASQLIISERKYSRKKTEYMNVCEKLQLDIKHEKAHAEEKSYEHGENAKAFSYKKDQHWKFQTLEESFECDGSGQGLYDKTICITPQSFLTGEKSCKDDEFRKNFDKITLFNHMRTDTRGKCSDLNEYGTSCDKTTAVEYNKVHMAMTHYECNERGINFSRKSPLTQSQRTITGWSAFESNKCEENFSQSSAHIVHQKTQAGDKFGEHNECTDALYQKLDFTAHQRIHTEDKFYLSDEHGKCRKSFYRKAHLIQHQRPHSGEKTYQYEECAKSFCSSSHPIQHPGTYVGFKLYECNECGKAFCQNSNLSKHLRIHTKEKPCDNNGCGRSYKSPLIGHQKTDAEMELCGGSEYGKTSHLKGHQRILMGEKPYECIECGKTFSKTSHLRAHQRIHTGEKPYECVECEKTFSHKTHLSVHQRVHTGEKPYECNDCGKSFTYNSALRAHQRIHTGEKPYECSDCEKTFAHNSALRAHHRIHTGEKPYECNECGRSFAHISVLKAHQRIHTGEKPYECNECGRSFTYNSALRAHQRIHTGRKPYECSDCEKTFAHNSALKIHQRIHTGEKPYECNECEKTFAHNSALRAHQNIHTGEKLYECSECGKTFFQKTRLSTHRRIHTGEKPYECSKCGKTFSQKSYLSGHERIHTGEKPYECNVCGKTFVYKAALIVHQRIHTGEKPYECNQCGKTFSQRTHLCAHQRIHTGEKPYECNECGKTFADNSALRAHHRIHTGEKPYECNDCGKTFSKTSHLRAHLRTRSGEKPYECSECGKTFSEKSYVSAHQRVHTGEKPYECNVCGKPFAHNSTLRVHQRIHTGEKSYECNDCGKTFSQKSHLSAHQRIHTGEKPYECNECGKAFAQNSTLRVHQRIHTGEKPYECDECGKTFVRKAALRVHHTRMHTREKTLACNGFGKS.

The region spanning 8–79 (VSFQDVTVEF…EDEFLNQRYP (72 aa)) is the KRAB domain. K178 is covalently cross-linked (Glycyl lysine isopeptide (Lys-Gly) (interchain with G-Cter in SUMO2)). The segment at 325–347 (FESNKCEENFSQSSAHIVHQKTQ) adopts a C2H2-type 1; degenerate zinc-finger fold. Residues 352 to 375 (FGEHNECTDALYQKLDFTAHQRIH) form a C2H2-type 2; degenerate zinc finger. Residues 381 to 406 (YLSDEHGKCRKSFYRKAHLIQHQRPH) form a C2H2-type 3; degenerate zinc finger. The segment at 412–434 (YQYEECAKSFCSSSHPIQHPGTY) adopts a C2H2-type 4; degenerate zinc-finger fold. 14 C2H2-type zinc fingers span residues 440 to 462 (YECNECGKAFCQNSNLSKHLRIH), 518 to 540 (YECIECGKTFSKTSHLRAHQRIH), 546 to 568 (YECVECEKTFSHKTHLSVHQRVH), 574 to 596 (YECNDCGKSFTYNSALRAHQRIH), 602 to 624 (YECSDCEKTFAHNSALRAHHRIH), 630 to 652 (YECNECGRSFAHISVLKAHQRIH), 658 to 680 (YECNECGRSFTYNSALRAHQRIH), 686 to 708 (YECSDCEKTFAHNSALKIHQRIH), 714 to 736 (YECNECEKTFAHNSALRAHQNIH), 742 to 764 (YECSECGKTFFQKTRLSTHRRIH), 770 to 792 (YECSKCGKTFSQKSYLSGHERIH), 798 to 820 (YECNVCGKTFVYKAALIVHQRIH), 826 to 848 (YECNQCGKTFSQRTHLCAHQRIH), and 854 to 876 (YECNECGKTFADNSALRAHHRIH). The C2H2-type 19; degenerate zinc finger occupies 882-904 (YECNDCGKTFSKTSHLRAHLRTR). C2H2-type zinc fingers lie at residues 910–932 (YECSECGKTFSEKSYVSAHQRVH), 938–960 (YECNVCGKPFAHNSTLRVHQRIH), 966–988 (YECNDCGKTFSQKSHLSAHQRIH), 994–1016 (YECNECGKAFAQNSTLRVHQRIH), and 1022–1045 (YECDECGKTFVRKAALRVHHTRMH).

This sequence belongs to the krueppel C2H2-type zinc-finger protein family.

The protein localises to the nucleus. Its function is as follows. Mediates transcriptional repression in response to zinc. Represses several genes, including SLC30A5, SLC30A10 and CBWD1, by binding to the zinc transcriptional regulatory element (ZTRE) (5'-C[AC]C[TAG]CC[TC]-N(0-50)-[GA]G[ATC]G[TG]G-3') found in the promoter region. May play a role in the control of ribosome biogenesis, regulating predominantly rRNA levels, as well as those of several ribosomal proteins, thus coordinating this highly zinc-demanding process with the available zinc supply. The sequence is that of Zinc finger protein 658 (ZNF658) from Homo sapiens (Human).